We begin with the raw amino-acid sequence, 178 residues long: CCHC-type zinc finger nucleic acid binding protein (178 aa).

S2 carries the N-acetylserine modification. Residues N4–T21 form a CCHC-type 1 zinc finger. K8 bears the N6-acetyllysine mark. Omega-N-methylarginine; by PRMT1 is present on residues R25 and R27. An RNA-binding Arg/Gly-rich region (RGG-box) region spans residues R25–T38. R32 and R34 each carry omega-N-methylarginine. S49 carries the post-translational modification Phosphoserine. 6 CCHC-type zinc fingers span residues D52–L69, D72–E90, Q97–H114, Q118–K135, V136–K153, and V157–I174. Omega-N-methylarginine occurs at positions 72, 79, and 80.

Associates with the 40S ribosomal subunit, the 80S ribosome and with polysomes. In terms of processing, arginine methylation by PRMT1 in the Arg/Gly-rich region impedes RNA binding.

It is found in the nucleus. It localises to the cytoplasm. The protein localises to the endoplasmic reticulum. Its function is as follows. Single-stranded DNA-binding protein that preferentially binds to the sterol regulatory element (SRE) sequence 5'-GTGCGGTG-3', and thereby mediates transcriptional repression. Has a role as transactivator of the Myc promoter. Binds single-stranded RNA in a sequence-specific manner. Binds G-rich elements in target mRNA coding sequences. Prevents G-quadruplex structure formation in vitro, suggesting a role in supporting translation by resolving stable structures on mRNAs. This is CCHC-type zinc finger nucleic acid binding protein from Mus musculus (Mouse).